The sequence spans 301 residues: tRNA-cytidine(32) 2-sulfurtransferase (301 aa).

A PP-loop motif motif is present at residues 55–60 (SGGKDS). [4Fe-4S] cluster is bound by residues Cys-130, Cys-133, and Cys-221.

Belongs to the TtcA family. In terms of assembly, homodimer. The cofactor is Mg(2+). [4Fe-4S] cluster is required as a cofactor.

It is found in the cytoplasm. The enzyme catalyses cytidine(32) in tRNA + S-sulfanyl-L-cysteinyl-[cysteine desulfurase] + AH2 + ATP = 2-thiocytidine(32) in tRNA + L-cysteinyl-[cysteine desulfurase] + A + AMP + diphosphate + H(+). Its pathway is tRNA modification. Its function is as follows. Catalyzes the ATP-dependent 2-thiolation of cytidine in position 32 of tRNA, to form 2-thiocytidine (s(2)C32). The sulfur atoms are provided by the cysteine/cysteine desulfurase (IscS) system. The sequence is that of tRNA-cytidine(32) 2-sulfurtransferase from Acinetobacter baumannii (strain AB307-0294).